The following is a 722-amino-acid chain: Ataxin-7-like protein 2 (722 aa).

Disordered regions lie at residues 106-228 (LSKL…PPKT), 288-317 (NSRKGESPKEKSPGRKEQVLERPSQELPSS), 347-403 (SRAS…DCHY), and 531-600 (AITS…GCRG). Positions 181-191 (GKPPMAPPSKE) are enriched in pro residues. Positions 230 to 297 (RKMARKECDL…NSRKGESPKE (68 aa)) constitute an SCA7 domain. The span at 290-311 (RKGESPKEKSPGRKEQVLERPS) shows a compositional bias: basic and acidic residues. A compositionally biased stretch (low complexity) spans 541–556 (PSPSFSKLPPSKASKS). Basic and acidic residues predominate over residues 558–569 (KGKDGVEVEAPS). The residue at position 575 (S575) is a Phosphoserine.

This is Ataxin-7-like protein 2 (ATXN7L2) from Homo sapiens (Human).